We begin with the raw amino-acid sequence, 130 residues long: Small ribosomal subunit protein uS9 (130 aa).

The protein belongs to the universal ribosomal protein uS9 family.

The polypeptide is Small ribosomal subunit protein uS9 (Paraburkholderia phytofirmans (strain DSM 17436 / LMG 22146 / PsJN) (Burkholderia phytofirmans)).